The chain runs to 223 residues: Endonuclease NucS (223 aa).

It belongs to the NucS endonuclease family.

It is found in the cytoplasm. Functionally, cleaves both 3' and 5' ssDNA extremities of branched DNA structures. This is Endonuclease NucS from Mycobacterium marinum (strain ATCC BAA-535 / M).